Consider the following 390-residue polypeptide: S-adenosylmethionine synthase 3 (390 aa).

Glu9 is a Mg(2+) binding site. Residue His15 coordinates ATP. Residue Glu43 coordinates K(+). Residues Glu56 and Gln99 each contribute to the L-methionine site. ATP-binding positions include Asp167 to Lys169, Ser235 to Phe238, Asp246, Arg252 to Lys253, Ala269, Lys273, and Lys277. Asp246 contributes to the L-methionine binding site. Residue Lys277 participates in L-methionine binding.

The protein belongs to the AdoMet synthase family. Homotetramer. Mn(2+) is required as a cofactor. Requires Mg(2+) as cofactor. Co(2+) serves as cofactor. The cofactor is K(+). It depends on NH4(+) as a cofactor. In terms of tissue distribution, mostly expressed in roots, and, to a lower extent, in hypocotyls and cotyledons.

The protein localises to the cytoplasm. The enzyme catalyses L-methionine + ATP + H2O = S-adenosyl-L-methionine + phosphate + diphosphate. It participates in amino-acid biosynthesis; S-adenosyl-L-methionine biosynthesis; S-adenosyl-L-methionine from L-methionine: step 1/1. Inhibited by products of SAMS reaction (SAM, Pi, PPi), substrate analogs (cycloleucine and ethionine), and alternative nucleotides (GTP, CTP and ADP). Strongly repressed by PPPi. Its function is as follows. Catalyzes the formation of S-adenosylmethionine from methionine and ATP. The reaction comprises two steps that are both catalyzed by the same enzyme: formation of S-adenosylmethionine (AdoMet) and triphosphate, and subsequent hydrolysis of the triphosphate. In Catharanthus roseus (Madagascar periwinkle), this protein is S-adenosylmethionine synthase 3 (SAMS3).